A 773-amino-acid chain; its full sequence is Immunoglobulin domain and leucine-rich repeat-containing protein 2 (773 aa).

The N-terminal stretch at 1 to 20 (MRKFVFFVVAILIQIHTTTS) is a signal peptide. The Extracellular portion of the chain corresponds to 21-493 (QRNRSSSPSG…DWYSYDVFNS (473 aa)). LRR repeat units follow at residues 52 to 73 (TRNI…KIYG), 74 to 96 (SNIQ…IFAP), 97 to 120 (FPQL…VIHP), 122 to 144 (LKVL…LLSI), 145 to 167 (FPKI…DTSN), and 168 to 191 (TKLK…TLRV). A glycan (N-linked (GlcNAc...) asparagine) is linked at Asn-114. Residue Asn-204 is glycosylated (N-linked (GlcNAc...) asparagine). LRR repeat units follow at residues 206-230 (STKL…DWKF), 233-251 (LRSL…QLDA), 252-275 (PLLN…ILTP), and 296-319 (PSTV…FIPM). An Ig-like domain is found at 349-479 (PVYAQTSIRK…GKDYGIYHFR (131 aa)). Asn-361 and Asn-379 each carry an N-linked (GlcNAc...) asparagine glycan. Cysteines 396 and 463 form a disulfide. The helical transmembrane segment at 494–514 (VFWGGLATSLIVCLISFLLNI) threads the bilayer. Over 515 to 773 (TWILTRKSAL…RSPDSPPEKR (259 aa)) the chain is Cytoplasmic. The tract at residues 725–773 (VRPGIIPTNAPSIRFTTKPTTSSISNEASTSSPSSSGAHRSPDSPPEKR) is disordered. The segment covering 733 to 745 (NAPSIRFTTKPTT) has biased composition (polar residues). Positions 746–763 (SSISNEASTSSPSSSGAH) are enriched in low complexity. Basic and acidic residues predominate over residues 764 to 773 (RSPDSPPEKR).

The protein localises to the membrane. This chain is Immunoglobulin domain and leucine-rich repeat-containing protein 2, found in Caenorhabditis elegans.